Here is a 253-residue protein sequence, read N- to C-terminus: Imidazole glycerol phosphate synthase subunit HisF (253 aa).

Residues Asp-11 and Asp-130 contribute to the active site.

The protein belongs to the HisA/HisF family. In terms of assembly, heterodimer of HisH and HisF.

The protein resides in the cytoplasm. The enzyme catalyses 5-[(5-phospho-1-deoxy-D-ribulos-1-ylimino)methylamino]-1-(5-phospho-beta-D-ribosyl)imidazole-4-carboxamide + L-glutamine = D-erythro-1-(imidazol-4-yl)glycerol 3-phosphate + 5-amino-1-(5-phospho-beta-D-ribosyl)imidazole-4-carboxamide + L-glutamate + H(+). It functions in the pathway amino-acid biosynthesis; L-histidine biosynthesis; L-histidine from 5-phospho-alpha-D-ribose 1-diphosphate: step 5/9. IGPS catalyzes the conversion of PRFAR and glutamine to IGP, AICAR and glutamate. The HisF subunit catalyzes the cyclization activity that produces IGP and AICAR from PRFAR using the ammonia provided by the HisH subunit. In Opitutus terrae (strain DSM 11246 / JCM 15787 / PB90-1), this protein is Imidazole glycerol phosphate synthase subunit HisF.